We begin with the raw amino-acid sequence, 424 residues long: Attachment protein G3P (424 aa).

Positions 1–18 are cleaved as a signal peptide; the sequence is MKKLLFAIPLVVPFYSHS. Positions 19–85 are N1; it reads AETVESCLAK…VPIGLAIPEN (67 aa). 2 cysteine pairs are disulfide-bonded: cysteine 25/cysteine 54 and cysteine 64/cysteine 71. A disordered region spans residues 83–147; it reads PENEGGGSEG…NPNPSLEESQ (65 aa). Positions 86–104 are G1 (Gly-rich linker); sequence EGGGSEGGGSEGGGSEGGG. The segment covering 86-105 has biased composition (gly residues); that stretch reads EGGGSEGGGSEGGGSEGGGT. The interval 105-141 is hinge; that stretch reads TKPPEYGDTPIPGYTYINPLDGTYPPGTEQNPANPNP. Positions 132–147 are enriched in polar residues; the sequence is TEQNPANPNPSLEESQ. Residues 142 to 228 are N2; it reads SLEESQPLNT…CEYQGQSSDL (87 aa). A disulfide bond links cysteine 206 and cysteine 219. A disordered region spans residues 222–279; that stretch reads QGQSSDLPQPPVNAGGGSGGGSGGGSEGGGSEGGGSEGGGSEGGGSGGGSGSGDFDYE. Positions 235 to 273 are enriched in gly residues; the sequence is AGGGSGGGSGGGSEGGGSEGGGSEGGGSEGGGSGGGSGS. Residues 236 to 274 are G2 (Gly-rich linker); the sequence is GGGSGGGSGGGSEGGGSEGGGSEGGGSEGGGSGGGSGSG. Residues 253–262 form a not essential for gene 3 function region; it reads EGGGSEGGGS. The tract at residues 275 to 424 is CT; the sequence is DFDYEKMANA…FANILRNKES (150 aa). Residues 398–418 traverse the membrane as a helical segment; that stretch reads VFAFLLYVATFMYVFSTFANI.

It belongs to the inovirus G3P protein family. In terms of assembly, interacts with G6P; this interaction is required for proper integration of G3P and G6P into the virion. Interacts with G8P. Interacts with the tip of the host pilus. Interacts (via N-terminus) with host TolA. Interacts (via transmembrane domain) with host TolQ (via 2nd and 3rd transmembrane domains); this interaction allows the phage translocation across the host inner membrane. Interacts (via transmembrane domain) with host TolR (via transmembrane domain); this interaction allows the phage translocation across the host inner membrane.

The protein localises to the virion. It is found in the host membrane. Functionally, plays essential roles both in the penetration of the viral genome into the bacterial host via pilus retraction and in the extrusion process. During the initial step of infection, G3P mediates adsorption of the phage to its primary receptor, the tip of host F-pilus. Attachment of the phage causes pilus retraction bringing the viral particle into close proximity of the host cell inner membrane. Binding to the host pilus initiates a change in the G3P conformation, allowing subsequent interaction with the host entry receptors tolA, TolQ and TolR and penetration of the viral DNA into the host cytoplasm. In the extrusion process, G3P mediates the release of the membrane-anchored virion from the cell via its C-terminal domain. The protein is Attachment protein G3P (III) of Enterobacteria phage f1 (Bacteriophage f1).